Consider the following 141-residue polypeptide: Protein NrdI (141 aa).

It belongs to the NrdI family.

Its function is as follows. Probably involved in ribonucleotide reductase function. The sequence is that of Protein NrdI from Wigglesworthia glossinidia brevipalpis.